Consider the following 281-residue polypeptide: CDAN1-interacting nuclease 1 (281 aa).

Position 114 is a phosphothreonine (T114).

The protein localises to the nucleus. Its subcellular location is the cytoplasm. Its function is as follows. Plays a role in erythroid cell differentiation. This is CDAN1-interacting nuclease 1 from Mus musculus (Mouse).